The sequence spans 203 residues: Large ribosomal subunit protein bL25 (203 aa).

It belongs to the bacterial ribosomal protein bL25 family. CTC subfamily. In terms of assembly, part of the 50S ribosomal subunit; part of the 5S rRNA/L5/L18/L25 subcomplex. Contacts the 5S rRNA. Binds to the 5S rRNA independently of L5 and L18.

This is one of the proteins that binds to the 5S RNA in the ribosome where it forms part of the central protuberance. This Wolbachia pipientis subsp. Culex pipiens (strain wPip) protein is Large ribosomal subunit protein bL25.